Reading from the N-terminus, the 169-residue chain is Fumarase E (169 aa).

Belongs to the MtlR/FumE family. Homodimer.

It carries out the reaction (S)-malate = fumarate + H2O. Functionally, in vitro catalyzes the addition of water to fumarate, forming malate. Cannot catalyze the reverse reaction. Cannot use the cis-isomer maleate as substrate. The protein is Fumarase E of Shigella flexneri.